The following is a 418-amino-acid chain: Secernin-3 (418 aa).

The propeptide occupies 1–5; that stretch reads MEPYS. The active site involves C6. At C6 the chain carries Glyoxylic acid (Cys); alternate. C6 carries the post-translational modification Pyruvic acid (Cys); alternate.

This sequence belongs to the peptidase C69 family. Secernin subfamily.

In terms of biological role, plays a role in thermal nociception. The chain is Secernin-3 (Scrn3) from Mus musculus (Mouse).